A 378-amino-acid chain; its full sequence is Queuine tRNA-ribosyltransferase (378 aa).

D89 acts as the Proton acceptor in catalysis. Substrate is bound by residues 89 to 93 (DSGGF), D143, Q194, and G221. The tract at residues 252 to 258 (GVGTPAN) is RNA binding. Residue D271 is the Nucleophile of the active site. Residues 276–280 (ARNGR) are RNA binding; important for wobble base 34 recognition. Zn(2+) is bound by residues C309, C311, C314, and H340.

This sequence belongs to the queuine tRNA-ribosyltransferase family. Homodimer. Within each dimer, one monomer is responsible for RNA recognition and catalysis, while the other monomer binds to the replacement base PreQ1. It depends on Zn(2+) as a cofactor.

The catalysed reaction is 7-aminomethyl-7-carbaguanine + guanosine(34) in tRNA = 7-aminomethyl-7-carbaguanosine(34) in tRNA + guanine. It functions in the pathway tRNA modification; tRNA-queuosine biosynthesis. Catalyzes the base-exchange of a guanine (G) residue with the queuine precursor 7-aminomethyl-7-deazaguanine (PreQ1) at position 34 (anticodon wobble position) in tRNAs with GU(N) anticodons (tRNA-Asp, -Asn, -His and -Tyr). Catalysis occurs through a double-displacement mechanism. The nucleophile active site attacks the C1' of nucleotide 34 to detach the guanine base from the RNA, forming a covalent enzyme-RNA intermediate. The proton acceptor active site deprotonates the incoming PreQ1, allowing a nucleophilic attack on the C1' of the ribose to form the product. After dissociation, two additional enzymatic reactions on the tRNA convert PreQ1 to queuine (Q), resulting in the hypermodified nucleoside queuosine (7-(((4,5-cis-dihydroxy-2-cyclopenten-1-yl)amino)methyl)-7-deazaguanosine). The polypeptide is Queuine tRNA-ribosyltransferase (Lachnoclostridium phytofermentans (strain ATCC 700394 / DSM 18823 / ISDg) (Clostridium phytofermentans)).